A 339-amino-acid chain; its full sequence is tRNA N6-adenosine threonylcarbamoyltransferase (339 aa).

Histidine 114 and histidine 118 together coordinate Fe cation. Residues 137–141 (VVSGG), aspartate 170, glycine 183, aspartate 187, and asparagine 277 each bind substrate. Fe cation is bound at residue aspartate 305.

The protein belongs to the KAE1 / TsaD family. The cofactor is Fe(2+).

The protein resides in the cytoplasm. It catalyses the reaction L-threonylcarbamoyladenylate + adenosine(37) in tRNA = N(6)-L-threonylcarbamoyladenosine(37) in tRNA + AMP + H(+). Its function is as follows. Required for the formation of a threonylcarbamoyl group on adenosine at position 37 (t(6)A37) in tRNAs that read codons beginning with adenine. Is involved in the transfer of the threonylcarbamoyl moiety of threonylcarbamoyl-AMP (TC-AMP) to the N6 group of A37, together with TsaE and TsaB. TsaD likely plays a direct catalytic role in this reaction. In Clostridium perfringens (strain ATCC 13124 / DSM 756 / JCM 1290 / NCIMB 6125 / NCTC 8237 / Type A), this protein is tRNA N6-adenosine threonylcarbamoyltransferase.